The chain runs to 124 residues: Small ribosomal subunit protein uS12 (124 aa).

Asp89 is subject to 3-methylthioaspartic acid.

This sequence belongs to the universal ribosomal protein uS12 family. As to quaternary structure, part of the 30S ribosomal subunit. Contacts proteins S8 and S17. May interact with IF1 in the 30S initiation complex.

Functionally, with S4 and S5 plays an important role in translational accuracy. Interacts with and stabilizes bases of the 16S rRNA that are involved in tRNA selection in the A site and with the mRNA backbone. Located at the interface of the 30S and 50S subunits, it traverses the body of the 30S subunit contacting proteins on the other side and probably holding the rRNA structure together. The combined cluster of proteins S8, S12 and S17 appears to hold together the shoulder and platform of the 30S subunit. In Shewanella loihica (strain ATCC BAA-1088 / PV-4), this protein is Small ribosomal subunit protein uS12.